The following is a 179-amino-acid chain: SCAN domain-containing protein 1 (179 aa).

Positions 1–107 are disordered; it reads MAATEPILAT…AGSRLGPETF (107 aa). Residues 52–80 show a composition bias toward low complexity; the sequence is SPNAAVPEAIPTPRAAASAALELPLGPAP. Residues 108–166 enclose the SCAN box domain; it reads RQRFRQFRYQDAAGPREAFRQLRELSRQWLRPDIRTKEQIVEMLVQEQLLAILPEAARA.

As to quaternary structure, interacts with ZNF202.

The protein resides in the nucleus. In terms of biological role, may regulate transcriptional activity. The sequence is that of SCAN domain-containing protein 1 (SCAND1) from Pan paniscus (Pygmy chimpanzee).